Here is a 550-residue protein sequence, read N- to C-terminus: MSDEKKKKRGFFRYSVLTTSSFSSWRRSSTSGSISQSSRTTSKTTTSSSVTSSNPINAPPPTATSSSSVLPSTSSEPPPPASAPPRISIYHKMVPSKSKFRQCDVCEHIFIFDFVRKQHLDDVYACNVCGIRVHKGCLDRVKNDCKITTQYMGGILENAVIQSNKKQWEKPTTASISKSLTTSPTCSTSTTMSPAGVEKNVHKTRKLISMTTSTLDDVTTFNSEINEEMDEETVLMTWEDVTIKLTDVDVMTKIGDGRFGSVYFGGYHGNAAVRFVNMNYLSQEDRRADVFATEIVSAYKNSRHDHIALFYGYVSDPVTNTYAIVTNFYQHNTLYHRIHEQLSEDFDQSWTFQISLQICQAMSYLHKKKILHRDLRTKNILLDNPNRVVVTDFALMKLERLENPRRNCTLLIPNHWIDYLSPEIAGNLMIDWRGDVLFQHELPFSQESDVYSFGTIFFELLLRRMPTGCDSWDQKLYAKMCGQKAALQRLDAQLQKIDGKLHELLLECWSSQPEKRPSFQQIVKRITVQMPRKESNKQKRRSTAHENPLF.

2 stretches are compositionally biased toward low complexity: residues 21-56 and 63-75; these read SFSS…SNPI and ATSS…STSS. Positions 21 to 87 are disordered; that stretch reads SFSSWRRSST…PPPASAPPRI (67 aa). The segment at 90 to 145 adopts a Phorbol-ester/DAG-type zinc-finger fold; that stretch reads YHKMVPSKSKFRQCDVCEHIFIFDFVRKQHLDDVYACNVCGIRVHKGCLDRVKNDC. Residues 172–196 are disordered; sequence TTASISKSLTTSPTCSTSTTMSPAG. The span at 177 to 193 shows a compositional bias: low complexity; that stretch reads SKSLTTSPTCSTSTTMS. The 281-residue stretch at 248–528 folds into the Protein kinase domain; sequence VDVMTKIGDG…FQQIVKRITV (281 aa). The segment at 530–550 is disordered; it reads MPRKESNKQKRRSTAHENPLF.

It belongs to the protein kinase superfamily. TKL Ser/Thr protein kinase family. As to quaternary structure, interacts with ndk-1.

Functionally, probable inactive protein kinase which positively regulates Ras-mediated signaling probably acting at the level of let-60/ras or/and lin-45/raf. In the germline, regulates meiotic progression during oogenesis and mpk-1 (isoform b) phosphorylation. Plays a role in meiotic recombination events. Functions redundantly with ksr-1 in the Ras-mediated regulation of larval survival, the development of excretory canal, in determining vulval precursor cell fate during vulval induction and in mpk-1 phosphorylation in somatic cells. This chain is Kinase suppressor of Ras B, found in Caenorhabditis elegans.